Consider the following 496-residue polypeptide: Probable cytosol aminopeptidase (496 aa).

2 residues coordinate Mn(2+): K258 and D263. Residue K270 is part of the active site. 3 residues coordinate Mn(2+): D281, D340, and E342. R344 is an active-site residue.

Belongs to the peptidase M17 family. Mn(2+) serves as cofactor.

It localises to the cytoplasm. The enzyme catalyses Release of an N-terminal amino acid, Xaa-|-Yaa-, in which Xaa is preferably Leu, but may be other amino acids including Pro although not Arg or Lys, and Yaa may be Pro. Amino acid amides and methyl esters are also readily hydrolyzed, but rates on arylamides are exceedingly low.. It catalyses the reaction Release of an N-terminal amino acid, preferentially leucine, but not glutamic or aspartic acids.. Presumably involved in the processing and regular turnover of intracellular proteins. Catalyzes the removal of unsubstituted N-terminal amino acids from various peptides. This is Probable cytosol aminopeptidase from Helicobacter pylori (strain G27).